The primary structure comprises 323 residues: Beta-ketoacyl-[acyl-carrier-protein] synthase III (323 aa).

Residues Cys-114 and His-250 contribute to the active site. Residues 251–255 (QANKR) are ACP-binding. The active site involves Asn-280.

The protein belongs to the thiolase-like superfamily. FabH family. Homodimer.

Its subcellular location is the cytoplasm. It carries out the reaction malonyl-[ACP] + acetyl-CoA + H(+) = 3-oxobutanoyl-[ACP] + CO2 + CoA. The protein operates within lipid metabolism; fatty acid biosynthesis. Functionally, catalyzes the condensation reaction of fatty acid synthesis by the addition to an acyl acceptor of two carbons from malonyl-ACP. Catalyzes the first condensation reaction which initiates fatty acid synthesis and may therefore play a role in governing the total rate of fatty acid production. Possesses both acetoacetyl-ACP synthase and acetyl transacylase activities. Its substrate specificity determines the biosynthesis of branched-chain and/or straight-chain of fatty acids. In Hyphomonas neptunium (strain ATCC 15444), this protein is Beta-ketoacyl-[acyl-carrier-protein] synthase III.